The sequence spans 619 residues: Nuclear hormone receptor family member nhr-6 (619 aa).

The segment covering 1 to 18 (MEQLSIQTDELQDQFSNC) has biased composition (polar residues). 4 disordered regions span residues 1-29 (MEQL…SYSS), 58-86 (MSKN…SKTT), 103-134 (QVNT…HRLP), and 196-232 (QHFP…PTSP). Over residues 19–29 (SPASVDSSYSS) the composition is skewed to low complexity. Positions 125–134 (KPSSSSHRLP) are enriched in polar residues. The segment covering 206–232 (GSQGTTSSSNNTGGTPSPHSSSLPTSP) has biased composition (low complexity). Residues 265-340 (DKMCAVCNDR…VGMVKEIVRH (76 aa)) constitute a DNA-binding region (nuclear receptor). 2 NR C4-type zinc fingers span residues 268–288 (CAVC…CEGC) and 304–328 (CAGN…YQKC). Residues 345–365 (GRRGRLSSKTKLARSEDQPSP) are disordered. Positions 346–356 (RRGRLSSKTKL) are enriched in basic residues. The region spanning 365-600 (PPLPLLALMG…STDAPPACGS (236 aa)) is the NR LBD domain. Residues 589 to 600 (LRSTDAPPACGS) are AF-2.

Belongs to the nuclear hormone receptor family. NR4 subfamily. As to expression, in hermaphrodites, expressed in the developing spermatheca and dorsal uterus. Expression includes the 8 cells of the dorsal somatic gonad primordium and the sujc cells that form the core of the spermatheca-uterine valve. Expressed in the precursor cells of the spermatheca-sheath lineages (SS cells) and in the precursors and descendents of the dorsal-uterine lineage (DU cells). In both hermaphroditic and male animals, expressed in a pair of head chemosensory neurons.

The protein localises to the nucleus. Its function is as follows. Transcriptional activator that induces gene expression by binding to the NGFI-B response element (NBRE) 5'-AAAGGTCA-3'. Required for proper morphogenesis of the spermatheca and the spermatheca-uterine valve formation. Promotes cell proliferation and differentiation of the spermatheca precursor cells during spermatheca development in larval stage L4. Might play a role in promoting G1/S phase progression in the spermatheca precursor cell lineage. Also required for the differentiation of the spermatheca-uterine junction core (sujc) cells which are generating the spermatheca-uterine valve. This is Nuclear hormone receptor family member nhr-6 (nhr-6) from Caenorhabditis elegans.